The chain runs to 310 residues: Carbamate kinase 1 (310 aa).

As to quaternary structure, homodimer (predominantly) and homotetramer.

The protein localises to the cytoplasm. The catalysed reaction is hydrogencarbonate + NH4(+) + ATP = carbamoyl phosphate + ADP + H2O + H(+). Its pathway is metabolic intermediate metabolism; carbamoyl phosphate degradation; CO(2) and NH(3) from carbamoyl phosphate: step 1/1. Its activity is regulated as follows. Inhibited by adenosine(5')pentaphospho(5')adenosine (Ap5A), Ap6A and to a much lower extent by Ap4A. Its function is as follows. Catalyzes the reversible synthesis of carbamate and ATP from carbamoyl phosphate and ADP. Can also catalyze, although with low efficiency, the phosphorylation of bicarbonate, leading to the formation of carboxyphosphate, an unstable intermediate found in the reactions catalyzed by carbamoyl-phosphate synthase and biotin carboxylase. Can also use acetate. This is Carbamate kinase 1 (arcC1) from Enterococcus faecium (Streptococcus faecium).